Reading from the N-terminus, the 1239-residue chain is Anillin (1239 aa).

4 disordered regions span residues Cys32–Gly67, Glu230–Gln265, Phe493–Gly621, and Gly684–Ser716. Residues Arg53–Ala63 show a composition bias toward low complexity. Positions Glu126 to Gln371 are interaction with and bundling of F-actin. The span at Pro252 to Gln265 shows a compositional bias: basic and acidic residues. The span at Ser500–Arg518 shows a compositional bias: low complexity. The span at Pro519–Ile528 shows a compositional bias: pro residues. The span at Glu551–Arg563 shows a compositional bias: basic and acidic residues. Residues Asp594–Gln610 are compositionally biased toward acidic residues. The segment covering Ala699 to Ser716 has biased composition (polar residues). Ser712 is modified (phosphoserine). The residue at position 740 (Thr740) is a Phosphothreonine. 2 positions are modified to phosphoserine: Ser744 and Ser754. Phosphothreonine is present on Thr831. Positions Asp834–Val861 form a coiled coil. Positions Ser1106–Thr1230 constitute a PH domain.

In terms of assembly, interacts with and bundles F-actin. In terms of tissue distribution, accumulates in the ring canals that interconnect cells of the germline cysts in males and the ovarian follicles in females. These structures develop from arrested contractile rings after a specialized cytokinesis in which the closing of the invaginating plasma membrane is incomplete. Also concentrates in the arrested cleavage furrows that initially link the oocyte to its 15 nurse cells in the early egg chamber and is subsequently lost from these furrows as germline cell division is completed.

It is found in the nucleus. The protein resides in the cytoplasm. Its subcellular location is the cytoskeleton. It localises to the cell cortex. The protein localises to the cell projection. It is found in the cilium. The protein resides in the flagellum. In terms of biological role, required for cytokinesis. Essential for the structural integrity of the cleavage furrow and for completion of cleavage furrow ingression and proper formation of the midbody. Required during cellularization of syncytial embryos for the proper formation and function of the furrow canals, the stable inward folds of the plasma membrane which separate the peripheral nuclei. Also required for the formation of the pole cells, the progenitors of the adult germline which are formed by cytokinesis of the cytoplasmic buds at the posterior pole of the syncytial embryo. Essential for embryonic viability. In Drosophila melanogaster (Fruit fly), this protein is Anillin (scra).